Here is a 554-residue protein sequence, read N- to C-terminus: RecBCD enzyme subunit RecD (554 aa).

Position 155–162 (155–162 (GGPGTGKT)) interacts with ATP.

It belongs to the RecD family. Heterotrimer of RecB, RecC and RecD. All subunits contribute to DNA-binding.

It carries out the reaction Couples ATP hydrolysis with the unwinding of duplex DNA at the replication fork by translocating in the 5'-3' direction. This creates two antiparallel DNA single strands (ssDNA). The leading ssDNA polymer is the template for DNA polymerase III holoenzyme which synthesizes a continuous strand.. The catalysed reaction is ATP + H2O = ADP + phosphate + H(+). In terms of biological role, a helicase/nuclease that prepares dsDNA breaks (DSB) for recombinational DNA repair. Binds to DSBs and unwinds DNA via a highly rapid and processive ATP-dependent bidirectional helicase activity. Holoenzyme degrades any linearized DNA that is unable to undergo homologous recombination. In the holoenzyme this subunit has ssDNA-dependent ATPase and 5'-3' helicase activity. When added to pre-assembled RecBC greatly stimulates nuclease activity and augments holoenzyme processivity. Unlike the case in E.coli, suppresses RecA-dependent homologous recombination, is instead required for single-strand annealing pathway repair of DSB. This is RecBCD enzyme subunit RecD from Mycolicibacterium smegmatis (strain ATCC 700084 / mc(2)155) (Mycobacterium smegmatis).